Consider the following 479-residue polypeptide: UPF0164 protein TP_0865 (479 aa).

Positions 1 to 49 are cleaved as a signal peptide; it reads MVRMRRRRACSSGGACGCAAVRGARSFLSVRVLGMRIGMSALCLAPLFA.

Belongs to the UPF0164 family.

The sequence is that of UPF0164 protein TP_0865 from Treponema pallidum (strain Nichols).